The primary structure comprises 588 residues: DNA mismatch repair protein MutL (588 aa).

Belongs to the DNA mismatch repair MutL/HexB family.

Functionally, this protein is involved in the repair of mismatches in DNA. It is required for dam-dependent methyl-directed DNA mismatch repair. May act as a 'molecular matchmaker', a protein that promotes the formation of a stable complex between two or more DNA-binding proteins in an ATP-dependent manner without itself being part of a final effector complex. The protein is DNA mismatch repair protein MutL of Methanocorpusculum labreanum (strain ATCC 43576 / DSM 4855 / Z).